We begin with the raw amino-acid sequence, 153 residues long: Gamma-glutamylaminecyclotransferase (153 aa).

7–10 (YGTL) is a binding site for substrate. The active-site Proton acceptor is E82. The tract at residues 130–153 (QLPHHDSYDSEGPHGLRYNPRENR) is disordered. Positions 132–153 (PHHDSYDSEGPHGLRYNPRENR) are enriched in basic and acidic residues.

This sequence belongs to the gamma-glutamylcyclotransferase family. Monomer.

It catalyses the reaction epsilon-(gamma-L-glutamyl)-L-lysine = 5-oxo-L-proline + L-lysine. In terms of biological role, contributes to degradation of proteins cross-linked by transglutaminases by degrading the cross-link between a lysine and a glutamic acid residue. Catalyzes the formation of 5-oxo-L-proline from L-gamma-glutamyl-L-epsilon-lysine. Inactive with L-gamma-glutamyl-alpha-amino acid substrates such as L-gamma-glutamyl-L-alpha-cysteine and L-gamma-glutamyl-L-alpha-alanine. This is Gamma-glutamylaminecyclotransferase (GGACT) from Homo sapiens (Human).